Consider the following 474-residue polypeptide: Probable fucosyltransferase 9 (474 aa).

A helical; Signal-anchor for type II membrane protein transmembrane segment spans residues 1 to 21 (MIKLTIAIATCLVLCLVLLLP). At 22-474 (SSNISYRHKY…LKLVDVSDEL (453 aa)) the chain is on the lumenal side. 3 N-linked (GlcNAc...) asparagine glycosylation sites follow: Asn24, Asn39, and Asn208.

The protein belongs to the glycosyltransferase 37 family. In terms of tissue distribution, expressed in leaves and stems.

The protein localises to the golgi apparatus. It localises to the golgi stack membrane. It participates in protein modification; protein glycosylation. Its function is as follows. May be involved in cell wall biosynthesis. May act as a fucosyltransferase. The protein is Probable fucosyltransferase 9 (FUT9) of Arabidopsis thaliana (Mouse-ear cress).